A 242-amino-acid polypeptide reads, in one-letter code: Adapter protein MecA (242 aa).

The protein belongs to the MecA family. In terms of assembly, homodimer.

In terms of biological role, enables the recognition and targeting of unfolded and aggregated proteins to the ClpC protease or to other proteins involved in proteolysis. The sequence is that of Adapter protein MecA from Streptococcus gordonii (strain Challis / ATCC 35105 / BCRC 15272 / CH1 / DL1 / V288).